Consider the following 113-residue polypeptide: UPF0342 protein SMU_782 (113 aa).

Belongs to the UPF0342 family.

This chain is UPF0342 protein SMU_782, found in Streptococcus mutans serotype c (strain ATCC 700610 / UA159).